A 316-amino-acid chain; its full sequence is 4-hydroxy-3-methylbut-2-enyl diphosphate reductase (316 aa).

A [4Fe-4S] cluster-binding site is contributed by cysteine 12. (2E)-4-hydroxy-3-methylbut-2-enyl diphosphate is bound by residues histidine 41 and histidine 74. Dimethylallyl diphosphate is bound by residues histidine 41 and histidine 74. The isopentenyl diphosphate site is built by histidine 41 and histidine 74. Cysteine 96 lines the [4Fe-4S] cluster pocket. Histidine 124 serves as a coordination point for (2E)-4-hydroxy-3-methylbut-2-enyl diphosphate. Residue histidine 124 coordinates dimethylallyl diphosphate. Residue histidine 124 coordinates isopentenyl diphosphate. The active-site Proton donor is the glutamate 126. Threonine 169 is a (2E)-4-hydroxy-3-methylbut-2-enyl diphosphate binding site. Cysteine 199 provides a ligand contact to [4Fe-4S] cluster. Residues serine 227, serine 228, asparagine 229, and serine 271 each coordinate (2E)-4-hydroxy-3-methylbut-2-enyl diphosphate. The dimethylallyl diphosphate site is built by serine 227, serine 228, asparagine 229, and serine 271. Serine 227, serine 228, asparagine 229, and serine 271 together coordinate isopentenyl diphosphate.

This sequence belongs to the IspH family. [4Fe-4S] cluster is required as a cofactor.

The catalysed reaction is isopentenyl diphosphate + 2 oxidized [2Fe-2S]-[ferredoxin] + H2O = (2E)-4-hydroxy-3-methylbut-2-enyl diphosphate + 2 reduced [2Fe-2S]-[ferredoxin] + 2 H(+). It catalyses the reaction dimethylallyl diphosphate + 2 oxidized [2Fe-2S]-[ferredoxin] + H2O = (2E)-4-hydroxy-3-methylbut-2-enyl diphosphate + 2 reduced [2Fe-2S]-[ferredoxin] + 2 H(+). The protein operates within isoprenoid biosynthesis; dimethylallyl diphosphate biosynthesis; dimethylallyl diphosphate from (2E)-4-hydroxy-3-methylbutenyl diphosphate: step 1/1. It participates in isoprenoid biosynthesis; isopentenyl diphosphate biosynthesis via DXP pathway; isopentenyl diphosphate from 1-deoxy-D-xylulose 5-phosphate: step 6/6. Functionally, catalyzes the conversion of 1-hydroxy-2-methyl-2-(E)-butenyl 4-diphosphate (HMBPP) into a mixture of isopentenyl diphosphate (IPP) and dimethylallyl diphosphate (DMAPP). Acts in the terminal step of the DOXP/MEP pathway for isoprenoid precursor biosynthesis. In Xanthomonas oryzae pv. oryzae (strain MAFF 311018), this protein is 4-hydroxy-3-methylbut-2-enyl diphosphate reductase.